A 50-amino-acid chain; its full sequence is Ornatin-E (50 aa).

The short motif at 42-44 (RGD) is the Cell attachment site element.

It belongs to the ornatin family.

It localises to the secreted. Potent inhibitor of fibrinogen interaction with platelet receptors expressed on glycoprotein IIb-IIIa complex. May prevent blood from clotting during either feeding and/or storage of ingested blood. This Placobdella ornata (Turtle leech) protein is Ornatin-E.